A 446-amino-acid polypeptide reads, in one-letter code: Putative diacyglycerol O-acyltransferase Rv3371 (446 aa).

The Proton acceptor role is filled by His-129. The tract at residues 425-446 is disordered; it reads SRALPSAARRGRPSVPTARARH.

The protein belongs to the long-chain O-acyltransferase family.

It catalyses the reaction an acyl-CoA + a 1,2-diacyl-sn-glycerol = a triacyl-sn-glycerol + CoA. The catalysed reaction is di-(9Z)-octadecenoylglycerol + (9Z)-octadecenoyl-CoA = 1,2,3-tri-(9Z-octadecenoyl)-glycerol + CoA. Its pathway is glycerolipid metabolism; triacylglycerol biosynthesis. In terms of biological role, catalyzes the terminal and only committed step in triacylglycerol synthesis by using diacylglycerol and fatty acyl CoA as substrates. Required for storage lipid synthesis. Upon expression in E.coli functions weakly as a triacylglycerol synthase, making triacylglycerol (TG) from diolein and long-chain fatty acyl-CoA. Has no wax synthase activity to produce wax esters. In Mycobacterium tuberculosis (strain ATCC 25618 / H37Rv), this protein is Putative diacyglycerol O-acyltransferase Rv3371.